Reading from the N-terminus, the 246-residue chain is tRNA (guanine-N(7)-)-methyltransferase (246 aa).

4 residues coordinate S-adenosyl-L-methionine: Glu-77, Glu-102, Asp-129, and Asp-152. Asp-152 is a catalytic residue. Substrate contacts are provided by residues Lys-156, Asp-188, and 225–228; that span reads TKFE.

The protein belongs to the class I-like SAM-binding methyltransferase superfamily. TrmB family.

It carries out the reaction guanosine(46) in tRNA + S-adenosyl-L-methionine = N(7)-methylguanosine(46) in tRNA + S-adenosyl-L-homocysteine. The protein operates within tRNA modification; N(7)-methylguanine-tRNA biosynthesis. Catalyzes the formation of N(7)-methylguanine at position 46 (m7G46) in tRNA. The sequence is that of tRNA (guanine-N(7)-)-methyltransferase from Haemophilus influenzae (strain ATCC 51907 / DSM 11121 / KW20 / Rd).